Consider the following 445-residue polypeptide: ATP-dependent protease ATPase subunit HslU (445 aa).

ATP contacts are provided by residues I17, G59–E64, D254, E319, and R391.

The protein belongs to the ClpX chaperone family. HslU subfamily. A double ring-shaped homohexamer of HslV is capped on each side by a ring-shaped HslU homohexamer. The assembly of the HslU/HslV complex is dependent on binding of ATP.

It is found in the cytoplasm. Functionally, ATPase subunit of a proteasome-like degradation complex; this subunit has chaperone activity. The binding of ATP and its subsequent hydrolysis by HslU are essential for unfolding of protein substrates subsequently hydrolyzed by HslV. HslU recognizes the N-terminal part of its protein substrates and unfolds these before they are guided to HslV for hydrolysis. The polypeptide is ATP-dependent protease ATPase subunit HslU (Pseudomonas fluorescens (strain Pf0-1)).